The chain runs to 498 residues: Glycerol kinase (498 aa).

Thr11 serves as a coordination point for ADP. Thr11, Ser12, and Ser13 together coordinate ATP. Thr11 is a sn-glycerol 3-phosphate binding site. An ADP-binding site is contributed by Arg15. Residues Arg81, Glu82, Tyr133, and Asp242 each coordinate sn-glycerol 3-phosphate. Glycerol-binding residues include Arg81, Glu82, Tyr133, Asp242, and Gln243. Residues Thr264 and Gly307 each coordinate ADP. ATP-binding residues include Thr264, Gly307, Gln311, and Gly408. The ADP site is built by Gly408 and Asn412.

It belongs to the FGGY kinase family.

It carries out the reaction glycerol + ATP = sn-glycerol 3-phosphate + ADP + H(+). The protein operates within polyol metabolism; glycerol degradation via glycerol kinase pathway; sn-glycerol 3-phosphate from glycerol: step 1/1. Inhibited by fructose 1,6-bisphosphate (FBP). In terms of biological role, key enzyme in the regulation of glycerol uptake and metabolism. Catalyzes the phosphorylation of glycerol to yield sn-glycerol 3-phosphate. In Ralstonia pickettii (strain 12J), this protein is Glycerol kinase.